A 139-amino-acid chain; its full sequence is uncharacterized protein (139 aa).

This is an uncharacterized protein from Sputnik virophage.